We begin with the raw amino-acid sequence, 408 residues long: MEGESTTAVMSGFVFGALTFHHLNSGSDTEGFLLGDVVGEAKNSITDSQMDDVEVLYTIDIQKHVPCYKLSRFYNVLGDLNIPELKKLLADQKKSQNVIGWYKFRHNTEQIMTFRERLLHKNLQEHLSNSGLVFLLLTSNPATETKSTHRLEYALHKPQDGFFHKVPLVISNLGMSDQQGYKTLCGSCVSVGLNTTIKKHRLEFFNEDGALAEVNRISNMYTTLQDELKKTCSQLVESEHSVEQLLEAINELKKQIAEKKKLNEETGNKVSEAPEENVLLCEALRKFFPQSTLLQSCRLSLGGRQIPHSCTASHNISDVNELTLMVKQYDIPEAHTRQAGKRKACSKQLGRTLTKKSRLLQLQKQHSQNGDSEGSDSERPLCNSGTETDGDILESLHMDVSRSKSPIF.

Residues 7 to 155 form the MPN domain; it reads TAVMSGFVFG…KSTHRLEYAL (149 aa). Residues 210–273 adopt a coiled-coil conformation; it reads ALAEVNRISN…EETGNKVSEA (64 aa). The span at 360 to 372 shows a compositional bias: polar residues; sequence LQLQKQHSQNGDS. Residues 360-408 are disordered; the sequence is LQLQKQHSQNGDSEGSDSERPLCNSGTETDGDILESLHMDVSRSKSPIF. Ser-405 carries the post-translational modification Phosphoserine. A pSXXF motif motif is present at residues 405–408; it reads SPIF.

Belongs to the FAM175 family. Abraxas subfamily. In terms of assembly, component of the BRCA1-A complex. Component of the BRISC complex. Interacts directly (when phosphorylated at Ser-405) with brca1. Homodimer. The phosphorylated homodimer can interact directly with two brca1 chains, giving rise to a heterotetramer. Post-translationally, phosphorylation of Ser-405 of the pSXXF motif by ATM or ATR constitutes a specific recognition motif for the BRCT domain of BRCA1.

The protein resides in the nucleus. Its function is as follows. Involved in DNA damage response and double-strand break (DSB) repair. Component of the BRCA1-A complex, acting as a central scaffold protein that assembles the various components of the complex and mediates the recruitment of brca1. The BRCA1-A complex specifically recognizes 'Lys-63'-linked ubiquitinated histones H2A and H2AX at DNA lesion sites, leading to target the brca1-bard1 heterodimer to sites of DNA damage at DSBs. This complex also possesses deubiquitinase activity that specifically removes 'Lys-63'-linked ubiquitin on histones H2A and H2AX. The protein is BRCA1-A complex subunit Abraxas 1 of Xenopus tropicalis (Western clawed frog).